We begin with the raw amino-acid sequence, 401 residues long: Adenosine 3'-phospho 5'-phosphosulfate transporter 2 (401 aa).

N-linked (GlcNAc...) asparagine glycosylation is found at Asn-12 and Asn-71. The next 6 helical transmembrane spans lie at 78–98 (LTQF…YGYL), 111–131 (YGWY…LIEL), 147–167 (MIIA…LGYL), 170–190 (PTQV…GVFI), 200–220 (VSAA…DSTI), and 223–243 (NFNL…AVIG). Asn-254 carries an N-linked (GlcNAc...) asparagine glycan. Transmembrane regions (helical) follow at residues 267-287 (IGFV…PAVT), 298-317 (GYAF…VLAL), 324-346 (LIAV…IFFA), and 349-369 (FTFQ…LNVY).

This sequence belongs to the nucleotide-sugar transporter family. SLC35B subfamily.

The protein localises to the golgi apparatus membrane. The enzyme catalyses 3'-phosphoadenylyl sulfate(in) + adenosine 3',5'-bisphosphate(out) = 3'-phosphoadenylyl sulfate(out) + adenosine 3',5'-bisphosphate(in). In terms of biological role, probably functions as a 3'-phosphoadenylyl sulfate:adenosine 3',5'-bisphosphate antiporter at the Golgi membranes. Mediates the transport from the cytosol into the lumen of the Golgi of 3'-phosphoadenylyl sulfate/adenosine 3'-phospho 5'-phosphosulfate (PAPS), a universal sulfuryl donor for sulfation events that take place in that compartment. In Pongo abelii (Sumatran orangutan), this protein is Adenosine 3'-phospho 5'-phosphosulfate transporter 2.